The primary structure comprises 1064 residues: WD repeat-containing protein on Y chromosome (1064 aa).

WD repeat units lie at residues 150–194 (EEVT…IRTA), 317–356 (RIPL…EPSA), 360–399 (GHNG…LLQT), 450–489 (THAA…RKII), 502–541 (IIDI…VVRN), 589–629 (FHTD…RRYS), 742–781 (KTGD…VPAS), and 825–864 (GHLK…LGTL). A disordered region spans residues 1022–1044 (SSLNIKQPTRRRSGKTHDPRNIR).

The chain is WD repeat-containing protein on Y chromosome from Drosophila ananassae (Fruit fly).